The following is a 350-amino-acid chain: Hydroxymethylglutaryl-CoA synthase (350 aa).

Residue glutamate 83 is the Proton donor/acceptor of the active site. The Acyl-thioester intermediate role is filled by cysteine 115. Residues cysteine 115 and threonine 156 each coordinate (3S)-3-hydroxy-3-methylglutaryl-CoA. A CoA-binding site is contributed by arginine 204. The (3S)-3-hydroxy-3-methylglutaryl-CoA site is built by threonine 206 and histidine 239. Catalysis depends on histidine 239, which acts as the Proton donor/acceptor. Lysine 244 is a CoA binding site. Residues asparagine 271 and serine 301 each contribute to the (3S)-3-hydroxy-3-methylglutaryl-CoA site.

The protein belongs to the thiolase-like superfamily. Archaeal HMG-CoA synthase family. As to quaternary structure, interacts with acetoacetyl-CoA thiolase that catalyzes the precedent step in the pathway and with a DUF35 protein. The acetoacetyl-CoA thiolase/HMG-CoA synthase complex channels the intermediate via a fused CoA-binding site, which allows for efficient coupling of the endergonic thiolase reaction with the exergonic HMGCS reaction.

The enzyme catalyses acetoacetyl-CoA + acetyl-CoA + H2O = (3S)-3-hydroxy-3-methylglutaryl-CoA + CoA + H(+). Its pathway is metabolic intermediate biosynthesis; (R)-mevalonate biosynthesis; (R)-mevalonate from acetyl-CoA: step 2/3. Its function is as follows. Catalyzes the condensation of acetyl-CoA with acetoacetyl-CoA to form 3-hydroxy-3-methylglutaryl-CoA (HMG-CoA). Functions in the mevalonate (MVA) pathway leading to isopentenyl diphosphate (IPP), a key precursor for the biosynthesis of isoprenoid compounds that are building blocks of archaeal membrane lipids. The protein is Hydroxymethylglutaryl-CoA synthase of Thermococcus onnurineus (strain NA1).